Consider the following 503-residue polypeptide: Long-chain-fatty-acid--CoA ligase FadD13 (503 aa).

Belongs to the ATP-dependent AMP-binding enzyme family. Homodimer.

Its subcellular location is the cell membrane. It carries out the reaction a long-chain fatty acid + ATP + CoA = a long-chain fatty acyl-CoA + AMP + diphosphate. Its pathway is lipid metabolism; fatty acid biosynthesis. Required for maintaining the appropriate mycolic acid composition and permeability of the envelope on its exposure to acidic pH. Catalyzes the activation of long-chain fatty acids as acyl-coenzyme A (acyl-CoA), which are then transferred to the multifunctional polyketide synthase (PKS) type III for further chain extension. In Mycobacterium tuberculosis (strain CDC 1551 / Oshkosh), this protein is Long-chain-fatty-acid--CoA ligase FadD13 (fadD13).